A 186-amino-acid chain; its full sequence is MDPTLKQLARSLREAPVVDRDGYEYFVHGVTDGVPPLDPAVLEAIADGIRERIDLEGVDTLVAPEAMGIHHGTALSLATRIPLVVVRKRSYGFPEEVAVHQETSYGESDLYLNGVDAGDRVVVVDDVLSSGGTIEAVCEALEAVGAEIVDIVTVLRRVDADHGDISRPVTSLLDVRVRDGALEVVE.

The protein belongs to the purine/pyrimidine phosphoribosyltransferase family. Archaeal HPRT subfamily.

Its function is as follows. May catalyze a purine salvage reaction, the substrate is unknown. The polypeptide is HGPRTase-like protein 3 (Haloterrigena turkmenica (strain ATCC 51198 / DSM 5511 / JCM 9101 / NCIMB 13204 / VKM B-1734 / 4k) (Halococcus turkmenicus)).